The primary structure comprises 129 residues: Gem-associated protein 7 (129 aa).

At Met-1 the chain carries N-acetylmethionine. An SUZ-C domain is found at 1 to 31 (MQSPLTIPVPVPVLRLPRGPDGFSRGFASDG). The Sm domain maps to 63–129 (RYLRSLLAMV…SDIISYSFKL (67 aa)).

This sequence belongs to the gemin-7 family. As to quaternary structure, part of the core SMN complex that contains SMN1, GEMIN2/SIP1, DDX20/GEMIN3, GEMIN4, GEMIN5, GEMIN6, GEMIN7, GEMIN8 and STRAP/UNRIP. Part of the SMN-Sm complex that contains SMN1, GEMIN2/SIP1, DDX20/GEMIN3, GEMIN4, GEMIN5, GEMIN6, GEMIN7, GEMIN8, STRAP/UNRIP and the Sm proteins SNRPB, SNRPD1, SNRPD2, SNRPD3, SNRPE, SNRPF and SNRPG. Interacts with GEMIN6; the interaction is direct. Interacts with STRAP/UNRIP; the interaction is direct. Interacts with GEMIN8; the interaction is direct. Interacts with SNRPB, SNRPD2, SNRPD3 and SNRPE; the interaction is direct.

Its subcellular location is the nucleus. It localises to the nucleoplasm. The protein resides in the gem. It is found in the cytoplasm. The SMN complex catalyzes the assembly of small nuclear ribonucleoproteins (snRNPs), the building blocks of the spliceosome, and thereby plays an important role in the splicing of cellular pre-mRNAs. Most spliceosomal snRNPs contain a common set of Sm proteins SNRPB, SNRPD1, SNRPD2, SNRPD3, SNRPE, SNRPF and SNRPG that assemble in a heptameric protein ring on the Sm site of the small nuclear RNA to form the core snRNP (Sm core). In the cytosol, the Sm proteins SNRPD1, SNRPD2, SNRPE, SNRPF and SNRPG are trapped in an inactive 6S pICln-Sm complex by the chaperone CLNS1A that controls the assembly of the core snRNP. To assemble core snRNPs, the SMN complex accepts the trapped 5Sm proteins from CLNS1A forming an intermediate. Binding of snRNA inside 5Sm triggers eviction of the SMN complex, thereby allowing binding of SNRPD3 and SNRPB to complete assembly of the core snRNP. The sequence is that of Gem-associated protein 7 (Gemin7) from Mus musculus (Mouse).